The sequence spans 470 residues: V-type ATP synthase beta chain (470 aa).

This sequence belongs to the ATPase alpha/beta chains family.

Produces ATP from ADP in the presence of a proton gradient across the membrane. The V-type beta chain is a regulatory subunit. This chain is V-type ATP synthase beta chain, found in Deinococcus geothermalis (strain DSM 11300 / CIP 105573 / AG-3a).